A 471-amino-acid polypeptide reads, in one-letter code: Putative multidrug resistance protein MdtD (471 aa).

Residues 1–11 are Periplasmic-facing; it reads MTDLPDSTRWQ. The chain crosses the membrane as a helical span at residues 12–32; it reads LWIVAFGFFMQSLDTTIVNTA. Residues 33-48 are Cytoplasmic-facing; that stretch reads LPSMAQSLGESPLHMH. The helical transmembrane segment at 49 to 69 threads the bilayer; the sequence is MVIVSYVLTVAVMLPASGWLA. Residues 70–76 are Periplasmic-facing; sequence DKVGVRN. Residues 77–97 traverse the membrane as a helical segment; sequence IFFTAIVLFTLGSLFCALSGT. Residues 98 to 101 lie on the Cytoplasmic side of the membrane; sequence LNEL. The chain crosses the membrane as a helical span at residues 102–124; the sequence is LLARALQGVGGAMMVPVGRLTVM. The Periplasmic portion of the chain corresponds to 125–137; that stretch reads KIVPREQYMAAMT. The chain crosses the membrane as a helical span at residues 138 to 158; sequence FVTLPGQVGPLLGPALGGLLV. Residues 159–164 are Cytoplasmic-facing; it reads EYASWH. Residues 165 to 185 traverse the membrane as a helical segment; that stretch reads WIFLINIPVGIIGAIATLMLM. The Periplasmic segment spans residues 186–196; it reads PNYTMQTRRFD. The chain crosses the membrane as a helical span at residues 197 to 217; sequence LSGFLLLAVGMAVLTLALDGS. Topologically, residues 218 to 224 are cytoplasmic; the sequence is KGTGLSP. Residues 225–245 form a helical membrane-spanning segment; it reads LAITGLVAVGVVALVLYLLHA. Topologically, residues 246-262 are periplasmic; that stretch reads RNNNRALFSLKLFRTRT. The chain crosses the membrane as a helical span at residues 263-283; that stretch reads FSLGLAGSFAGRIGSGMLPFM. The Cytoplasmic segment spans residues 284 to 285; the sequence is TP. A helical transmembrane segment spans residues 286 to 306; that stretch reads VFLQIGLGFSPFHAGLMMIPM. At 307 to 341 the chain is on the periplasmic side; that stretch reads VLGSMGMKRIVVQVVNRFGYRRVLVATTLGLSLVT. The chain crosses the membrane as a helical span at residues 342 to 362; that stretch reads LLFMTTALLGWYYVLPFVLFL. Topologically, residues 363–395 are cytoplasmic; the sequence is QGMVNSTRFSSMNTLTLKDLPDNLASSGNSLLS. A helical membrane pass occupies residues 396-416; sequence MIMQLSMSIGVTIAGLLLGLF. The Periplasmic segment spans residues 417 to 430; the sequence is GSQHVSVDSSTTQT. A helical membrane pass occupies residues 431-451; that stretch reads VFMYTWLSMAFIIALPAFIFA. The Cytoplasmic portion of the chain corresponds to 452-471; that stretch reads RVPNDTHQNVAISRRKRSAQ.

The protein belongs to the major facilitator superfamily. TCR/Tet family.

The protein resides in the cell inner membrane. This is Putative multidrug resistance protein MdtD from Escherichia coli O157:H7.